A 428-amino-acid polypeptide reads, in one-letter code: 3-phosphoshikimate 1-carboxyvinyltransferase (428 aa).

3-phosphoshikimate contacts are provided by lysine 23, serine 24, and arginine 28. Lysine 23 contacts phosphoenolpyruvate. Positions 92 and 120 each coordinate phosphoenolpyruvate. 4 residues coordinate 3-phosphoshikimate: serine 165, glutamine 167, aspartate 312, and lysine 339. Glutamine 167 provides a ligand contact to phosphoenolpyruvate. Aspartate 312 (proton acceptor) is an active-site residue. Phosphoenolpyruvate is bound by residues arginine 343 and arginine 384.

The protein belongs to the EPSP synthase family. As to quaternary structure, monomer.

Its subcellular location is the cytoplasm. The enzyme catalyses 3-phosphoshikimate + phosphoenolpyruvate = 5-O-(1-carboxyvinyl)-3-phosphoshikimate + phosphate. It functions in the pathway metabolic intermediate biosynthesis; chorismate biosynthesis; chorismate from D-erythrose 4-phosphate and phosphoenolpyruvate: step 6/7. Its function is as follows. Catalyzes the transfer of the enolpyruvyl moiety of phosphoenolpyruvate (PEP) to the 5-hydroxyl of shikimate-3-phosphate (S3P) to produce enolpyruvyl shikimate-3-phosphate and inorganic phosphate. This is 3-phosphoshikimate 1-carboxyvinyltransferase from Sulfurimonas denitrificans (strain ATCC 33889 / DSM 1251) (Thiomicrospira denitrificans (strain ATCC 33889 / DSM 1251)).